Reading from the N-terminus, the 155-residue chain is Protein-export protein SecB (155 aa).

Belongs to the SecB family. In terms of assembly, homotetramer, a dimer of dimers. One homotetramer interacts with 1 SecA dimer.

The protein resides in the cytoplasm. Its function is as follows. One of the proteins required for the normal export of preproteins out of the cell cytoplasm. It is a molecular chaperone that binds to a subset of precursor proteins, maintaining them in a translocation-competent state. It also specifically binds to its receptor SecA. This Shigella sonnei (strain Ss046) protein is Protein-export protein SecB.